The sequence spans 242 residues: Probable transcriptional regulatory protein Bmul_0984/BMULJ_02280 (242 aa).

The protein belongs to the TACO1 family.

Its subcellular location is the cytoplasm. This chain is Probable transcriptional regulatory protein Bmul_0984/BMULJ_02280, found in Burkholderia multivorans (strain ATCC 17616 / 249).